A 215-amino-acid polypeptide reads, in one-letter code: Guanylate kinase (215 aa).

One can recognise a Guanylate kinase-like domain in the interval 9–187 (GTLYIVSAPS…ALDELSCLVH (179 aa)). ATP is bound at residue 16–23 (APSGAGKT).

This sequence belongs to the guanylate kinase family.

The protein resides in the cytoplasm. The enzyme catalyses GMP + ATP = GDP + ADP. In terms of biological role, essential for recycling GMP and indirectly, cGMP. This Chromohalobacter salexigens (strain ATCC BAA-138 / DSM 3043 / CIP 106854 / NCIMB 13768 / 1H11) protein is Guanylate kinase.